A 416-amino-acid polypeptide reads, in one-letter code: UDP-N-acetylmuramoylalanine--D-glutamate ligase (416 aa).

108-114 (GTTGKTT) serves as a coordination point for ATP.

This sequence belongs to the MurCDEF family.

Its subcellular location is the cytoplasm. It catalyses the reaction UDP-N-acetyl-alpha-D-muramoyl-L-alanine + D-glutamate + ATP = UDP-N-acetyl-alpha-D-muramoyl-L-alanyl-D-glutamate + ADP + phosphate + H(+). Its pathway is cell wall biogenesis; peptidoglycan biosynthesis. Functionally, cell wall formation. Catalyzes the addition of glutamate to the nucleotide precursor UDP-N-acetylmuramoyl-L-alanine (UMA). The protein is UDP-N-acetylmuramoylalanine--D-glutamate ligase of Chlamydia trachomatis serovar L2 (strain ATCC VR-902B / DSM 19102 / 434/Bu).